A 404-amino-acid chain; its full sequence is Druantia protein DruA (404 aa).

It is found in the cytoplasm. Functionally, component of antiviral defense system Druantia type I, composed of DruA, DruB, DruC, DruD and DruE. Expression of Druantia in E.coli (strain MG1655) confers resistance to phage lambda, SECphi18, SECphi27 and T4. In Escherichia coli (strain UMEA 4076-1), this protein is Druantia protein DruA.